The chain runs to 905 residues: Alanine--tRNA ligase (905 aa).

Histidine 569, histidine 573, cysteine 693, and histidine 697 together coordinate Zn(2+).

The protein belongs to the class-II aminoacyl-tRNA synthetase family. Requires Zn(2+) as cofactor.

The protein resides in the cytoplasm. The catalysed reaction is tRNA(Ala) + L-alanine + ATP = L-alanyl-tRNA(Ala) + AMP + diphosphate. In terms of biological role, catalyzes the attachment of alanine to tRNA(Ala) in a two-step reaction: alanine is first activated by ATP to form Ala-AMP and then transferred to the acceptor end of tRNA(Ala). Also edits incorrectly charged Ser-tRNA(Ala) and Gly-tRNA(Ala) via its editing domain. The protein is Alanine--tRNA ligase of Roseiflexus sp. (strain RS-1).